A 1085-amino-acid chain; its full sequence is Translation factor GUF1 homolog, mitochondrial (1085 aa).

Residues 232-409 (KYIRNFCILA…RIISDIPPPI (178 aa)) form the tr-type G domain. GTP contacts are provided by residues 241 to 248 (AHIDSGKS), 302 to 306 (DTPGH), and 356 to 359 (NKID).

It belongs to the TRAFAC class translation factor GTPase superfamily. Classic translation factor GTPase family. LepA subfamily.

The protein localises to the mitochondrion inner membrane. It carries out the reaction GTP + H2O = GDP + phosphate + H(+). Functionally, promotes mitochondrial protein synthesis. May act as a fidelity factor of the translation reaction, by catalyzing a one-codon backward translocation of tRNAs on improperly translocated ribosomes. Binds to mitochondrial ribosomes in a GTP-dependent manner. This chain is Translation factor GUF1 homolog, mitochondrial, found in Plasmodium falciparum (isolate 3D7).